Reading from the N-terminus, the 185-residue chain is ATP synthase subunit delta, chloroplastic (185 aa).

It belongs to the ATPase delta chain family. F-type ATPases have 2 components, F(1) - the catalytic core - and F(0) - the membrane proton channel. F(1) has five subunits: alpha(3), beta(3), gamma(1), delta(1), epsilon(1). CF(0) has four main subunits: a(1), b(1), b'(1) and c(10-14). The alpha and beta chains form an alternating ring which encloses part of the gamma chain. F(1) is attached to F(0) by a central stalk formed by the gamma and epsilon chains, while a peripheral stalk is formed by the delta, b and b' chains.

It localises to the plastid. Its subcellular location is the chloroplast thylakoid membrane. F(1)F(0) ATP synthase produces ATP from ADP in the presence of a proton or sodium gradient. F-type ATPases consist of two structural domains, F(1) containing the extramembraneous catalytic core and F(0) containing the membrane proton channel, linked together by a central stalk and a peripheral stalk. During catalysis, ATP synthesis in the catalytic domain of F(1) is coupled via a rotary mechanism of the central stalk subunits to proton translocation. Its function is as follows. This protein is part of the stalk that links CF(0) to CF(1). It either transmits conformational changes from CF(0) to CF(1) or is implicated in proton conduction. The polypeptide is ATP synthase subunit delta, chloroplastic (Guillardia theta (Cryptophyte)).